An 88-amino-acid polypeptide reads, in one-letter code: Stannin (88 aa).

The Mitochondrial intermembrane portion of the chain corresponds to 1 to 10; the sequence is MSIMDHSPTT. A helical membrane pass occupies residues 11-31; the sequence is GVVTVIVILIAIAALGALILG. Residues 32–88 are Cytoplasmic-facing; that stretch reads CWCYLRLQRISQSEDEESIVGDGETKEPFLLVQYSAKGPCVERKAKLMTANSPEVHG. Phosphoserine is present on residues Ser-49 and Ser-83.

Belongs to the stannin family. As to quaternary structure, monomer.

Its subcellular location is the mitochondrion outer membrane. Its function is as follows. Plays a role in the toxic effects of organotins. Plays a role in endosomal maturation. This is Stannin (Snn) from Mus musculus (Mouse).